We begin with the raw amino-acid sequence, 227 residues long: DNA packaging ATPase P9 (227 aa).

Residue 16 to 23 (GKTGTGKT) coordinates ATP.

In terms of assembly, heterodimer of P6 and P9; further multimerizes as hexamers of heterodimers. Part of the dodecameric portal complex that is composed of the packaging efficiency factor P6, the DNA packaging ATPase P9, and the internal heterododecamer P20/P22 which spans the virion inner membrane.

It is found in the virion. Functionally, together with the packaging efficiency factor P6, forms the external part of the portal vertex that is embeded in the capsid and which plays critical roles in genome packaging and genome ejection. Both proteins multimerize as a single ring-shaped heterdodecamer arranged around a central channel. This Enterobacteria phage PRD1 (Bacteriophage PRD1) protein is DNA packaging ATPase P9 (IX).